We begin with the raw amino-acid sequence, 266 residues long: MGAGCVKVTKYFLFLFNLLFFILGAVILGFGVWILADKNSFISVLQTSSSSLQVGAYVFIGVGAITIVMGFLGCIGAVNEVRCLLGLYFVFLLLILIAQVTVGVLFYFNADKLKKEMGNTVMDIIRNYTANATSSREEAWDYVQAQVKCCGWVSHYNWTENEELMGFTKTTYPCSCEKIKEEDNQLIVKKGFCEADNSTVSENNPEDWPVNTEGCMEKAQAWLQENFGILLGVCAGVAVIELLGLFLSICLCRYIHSEDYSKVPKY.

At 1–11 (MGAGCVKVTKY) the chain is on the cytoplasmic side. The S-palmitoyl cysteine moiety is linked to residue cysteine 5. Residues 12-32 (FLFLFNLLFFILGAVILGFGV) traverse the membrane as a helical segment. Residues 33 to 53 (WILADKNSFISVLQTSSSSLQ) lie on the Extracellular side of the membrane. A helical membrane pass occupies residues 54-72 (VGAYVFIGVGAITIVMGFL). Residues 73–83 (GCIGAVNEVRC) are Cytoplasmic-facing. Residue cysteine 74 is the site of S-palmitoyl cysteine attachment. The chain crosses the membrane as a helical span at residues 84–110 (LLGLYFVFLLLILIAQVTVGVLFYFNA). The Extracellular portion of the chain corresponds to 111–227 (DKLKKEMGNT…KAQAWLQENF (117 aa)). N-linked (GlcNAc...) asparagine glycosylation is found at asparagine 127, asparagine 131, asparagine 157, and asparagine 197. Residues 228-249 (GILLGVCAGVAVIELLGLFLSI) traverse the membrane as a helical segment. Topologically, residues 250–266 (CLCRYIHSEDYSKVPKY) are cytoplasmic.

This sequence belongs to the tetraspanin (TM4SF) family. Forms homooligomers. Interacts directly with IGSF8. Interacts with EGFR. Interacts with VEGFA and PDGFA. Interacts with ITGA4. Interacts with ITGA6; this interaction reduces ITGA6 cell surface expression. Interacts with ITGB1. Interacts with TLR4; this interaction inhibits TLR4-mediated signaling pathway. Interacts with TLR9. Interacts with PLAUR. Palmitoylated. Palmitoylation contributes to oligomerization and surface expression. Highest expression in the spleen and the kidney. Low expression in skeletal muscle and in the heart.

It localises to the cell membrane. The protein resides in the cytoplasmic vesicle. It is found in the phagosome. Structural component of specialized membrane microdomains known as tetraspanin-enriched microdomains (TERMs), which act as platforms for receptor clustering and signaling. Participates thereby in diverse biological functions such as cell signal transduction, adhesion, migration and protein trafficking. Acts as a attenuator of EGF signaling, facilitating ligand-induced endocytosis of the receptor and its subsequent desensitization. Mechanistically, modulates ligand-induced ubiquitination and trafficking of EGFR via E3 ligase CBL phosphorylation by PKC. Increases cell-matrix adhesion by regulating the membrane organization of integrin alpha4/ITA4. Modulates adhesion and suppresses cell migration through other integrins such as the alpha6/ITGA6 and beta1/ITGB1. Decreases cell-associated plasminogen activation by interfering with the interaction between urokinase-type plasminogen activator/PLAU and its receptor PLAUR. Associates with CD4 or CD8 and delivers costimulatory signals for the TCR/CD3 pathway. Plays a role in the restrains phagocyte migration but supports macrophage activation. Plays a role in TLR9 trafficking to acidified CpG-containing compartments by controlling interaction between TLR9 and VAMP3 and subsequent myddosome assembly. Inhibits LPS-induced inflammatory response by preventing binding of LPS to TLR4 on the cell surface. Plays a role in the activation of macrophages into anti-inflammatory phenotypes. Independently of Toll-like receptor (TLR) signaling, is recruited to pathogen-containing phagosomes prior to fusion with lysosomes and participates in antigen presentation. Also acts to control angiogenesis and switch angiogenic milieu to quiescent state by binding and sequestering VEGFA and PDGFA to inhibit the signaling they trigger via their respective cell surface receptor. This Mus musculus (Mouse) protein is CD82 antigen (Cd82).